Reading from the N-terminus, the 165-residue chain is Large ribosomal subunit protein uL5 (165 aa).

This sequence belongs to the universal ribosomal protein uL5 family. Part of the 50S ribosomal subunit; contacts the 5S rRNA and probably tRNA. Forms a bridge to the 30S subunit in the 70S ribosome.

Functionally, this is one of the proteins that bind and probably mediate the attachment of the 5S RNA into the large ribosomal subunit, where it forms part of the central protuberance. In the 70S ribosome it contacts protein S13 of the 30S subunit (bridge B1b), connecting the 2 subunits; this bridge is implicated in subunit movement. May contact the P site tRNA; the 5S rRNA and some of its associated proteins might help stabilize positioning of ribosome-bound tRNAs. In Methanosarcina acetivorans (strain ATCC 35395 / DSM 2834 / JCM 12185 / C2A), this protein is Large ribosomal subunit protein uL5.